A 243-amino-acid polypeptide reads, in one-letter code: 2-C-methyl-D-erythritol 4-phosphate cytidylyltransferase (243 aa).

The protein belongs to the IspD/TarI cytidylyltransferase family. IspD subfamily.

It catalyses the reaction 2-C-methyl-D-erythritol 4-phosphate + CTP + H(+) = 4-CDP-2-C-methyl-D-erythritol + diphosphate. It functions in the pathway isoprenoid biosynthesis; isopentenyl diphosphate biosynthesis via DXP pathway; isopentenyl diphosphate from 1-deoxy-D-xylulose 5-phosphate: step 2/6. Its function is as follows. Catalyzes the formation of 4-diphosphocytidyl-2-C-methyl-D-erythritol from CTP and 2-C-methyl-D-erythritol 4-phosphate (MEP). The chain is 2-C-methyl-D-erythritol 4-phosphate cytidylyltransferase from Aeromonas hydrophila subsp. hydrophila (strain ATCC 7966 / DSM 30187 / BCRC 13018 / CCUG 14551 / JCM 1027 / KCTC 2358 / NCIMB 9240 / NCTC 8049).